The sequence spans 948 residues: Isoleucine--tRNA ligase (948 aa).

The 'HIGH' region motif lies at 58 to 68; the sequence is PYANGDIHIGH. Residue Glu-566 participates in L-isoleucyl-5'-AMP binding. The 'KMSKS' region motif lies at 607-611; that stretch reads KMSKS. Lys-610 lines the ATP pocket. Zn(2+)-binding residues include Cys-911, Cys-914, Cys-931, and Cys-934.

The protein belongs to the class-I aminoacyl-tRNA synthetase family. IleS type 1 subfamily. As to quaternary structure, monomer. The cofactor is Zn(2+).

It is found in the cytoplasm. The enzyme catalyses tRNA(Ile) + L-isoleucine + ATP = L-isoleucyl-tRNA(Ile) + AMP + diphosphate. Catalyzes the attachment of isoleucine to tRNA(Ile). As IleRS can inadvertently accommodate and process structurally similar amino acids such as valine, to avoid such errors it has two additional distinct tRNA(Ile)-dependent editing activities. One activity is designated as 'pretransfer' editing and involves the hydrolysis of activated Val-AMP. The other activity is designated 'posttransfer' editing and involves deacylation of mischarged Val-tRNA(Ile). The chain is Isoleucine--tRNA ligase from Vibrio vulnificus (strain CMCP6).